A 209-amino-acid polypeptide reads, in one-letter code: Uracil phosphoribosyltransferase (209 aa).

5-phospho-alpha-D-ribose 1-diphosphate is bound by residues Arg79, Arg104, and 131 to 139 (DPMLATGGS). Residues Ile194 and 199–201 (GDA) contribute to the uracil site. Asp200 provides a ligand contact to 5-phospho-alpha-D-ribose 1-diphosphate.

The protein belongs to the UPRTase family. It depends on Mg(2+) as a cofactor.

The enzyme catalyses UMP + diphosphate = 5-phospho-alpha-D-ribose 1-diphosphate + uracil. Its pathway is pyrimidine metabolism; UMP biosynthesis via salvage pathway; UMP from uracil: step 1/1. Allosterically activated by GTP. Functionally, catalyzes the conversion of uracil and 5-phospho-alpha-D-ribose 1-diphosphate (PRPP) to UMP and diphosphate. The chain is Uracil phosphoribosyltransferase from Streptococcus pneumoniae serotype 4 (strain ATCC BAA-334 / TIGR4).